The primary structure comprises 211 residues: Claudin-1 (211 aa).

Residues 1 to 7 (MANAGLQ) are Cytoplasmic-facing. The helical transmembrane segment at 8-28 (LLGFILASLGWIGSIVSTALP) threads the bilayer. Residues 29-81 (QWKIYSYAGDNIVTAQAIYEGLWMSCVSQSTGQIQCKVFDSLLNLNSTLQATR) lie on the Extracellular side of the membrane. A disulfide bridge connects residues Cys-54 and Cys-64. A helical membrane pass occupies residues 82 to 102 (ALMVIGILLGLIAIFVSTIGM). Over 103–115 (KCMRCLEDDEVQK) the chain is Cytoplasmic. A helical transmembrane segment spans residues 116 to 136 (MWMAVIGGIIFLISGLATLVA). At 137-163 (TAWYGNRIVQEFYDPLTPINARYEFGQ) the chain is on the extracellular side. The helical transmembrane segment at 164 to 184 (ALFTGWAAASLCLLGGVLLSC) threads the bilayer. Over 185 to 211 (SCPRKTTSYPTPRPYPKPTPSSGKDYV) the chain is Cytoplasmic. Positions 190–211 (TTSYPTPRPYPKPTPSSGKDYV) are disordered. Positions 210–211 (YV) are interactions with TJP1, TJP2, TJP3 and PATJ.

It belongs to the claudin family. In terms of assembly, can form homo- and heteropolymers with other CLDN. Homopolymers interact with CLDN3, but not CLDN2, homopolymers. Directly interacts with TJP1/ZO-1, TJP2/ZO-2 and TJP3/ZO-3. Interacts with MPDZ and PATJ. Interacts with OCLN, CD81, CLDN4, CLDN6 and CLDN9. In terms of tissue distribution, detected in epidermis and liver (at protein level). Widely expressed, with highest levels in liver and kidney.

The protein resides in the cell junction. It localises to the tight junction. The protein localises to the cell membrane. It is found in the basolateral cell membrane. In terms of biological role, claudins function as major constituents of the tight junction complexes that regulate the permeability of epithelia. While some claudin family members play essential roles in the formation of impermeable barriers, others mediate the permeability to ions and small molecules. Often, several claudin family members are coexpressed and interact with each other, and this determines the overall permeability. CLDN1 is required to prevent the paracellular diffusion of small molecules through tight junctions in the epidermis and is required for the normal barrier function of the skin. Required for normal water homeostasis and to prevent excessive water loss through the skin, probably via an indirect effect on the expression levels of other proteins, since CLDN1 itself seems to be dispensable for water barrier formation in keratinocyte tight junctions. The protein is Claudin-1 (Cldn1) of Mus musculus (Mouse).